Reading from the N-terminus, the 253-residue chain is Imidazole glycerol phosphate synthase subunit HisF (253 aa).

Catalysis depends on residues D13 and D132.

This sequence belongs to the HisA/HisF family. Heterodimer of HisH and HisF.

The protein resides in the cytoplasm. The catalysed reaction is 5-[(5-phospho-1-deoxy-D-ribulos-1-ylimino)methylamino]-1-(5-phospho-beta-D-ribosyl)imidazole-4-carboxamide + L-glutamine = D-erythro-1-(imidazol-4-yl)glycerol 3-phosphate + 5-amino-1-(5-phospho-beta-D-ribosyl)imidazole-4-carboxamide + L-glutamate + H(+). Its pathway is amino-acid biosynthesis; L-histidine biosynthesis; L-histidine from 5-phospho-alpha-D-ribose 1-diphosphate: step 5/9. IGPS catalyzes the conversion of PRFAR and glutamine to IGP, AICAR and glutamate. The HisF subunit catalyzes the cyclization activity that produces IGP and AICAR from PRFAR using the ammonia provided by the HisH subunit. The protein is Imidazole glycerol phosphate synthase subunit HisF of Aliarcobacter butzleri (strain RM4018) (Arcobacter butzleri).